The following is a 101-amino-acid chain: Cell division suppressor protein YneA (101 aa).

A LysM domain is found at 35–86; that stretch reads MTVTVASGDTLWGLAKQYEPAHGLSPDEFIRWVVDVNRLPSSRLTAGEQIVI.

Belongs to the YneA family.

Its subcellular location is the cytoplasm. Functionally, inhibits cell division during the SOS response. Affects a later stage of the cell division protein assembly, after the assembly of the Z ring, by probably suppressing recruitment of FtsL and/or DivIC to the division machinery. The protein is Cell division suppressor protein YneA of Geobacillus thermodenitrificans (strain NG80-2).